The sequence spans 337 residues: G-protein coupled receptor 26 (337 aa).

The Extracellular portion of the chain corresponds to 1 to 10 (MNSWDAGLAG). Residues 11-31 (LLVGTIGVSLLSNGLVLLCLL) traverse the membrane as a helical segment. The Cytoplasmic portion of the chain corresponds to 32 to 47 (HSADIRRQAPALFTLN). A helical membrane pass occupies residues 48–68 (LTCGNLLCTVVNMPLTLAGVV). The Extracellular portion of the chain corresponds to 69–81 (AQRQPAGDRLCRL). A disulfide bridge links Cys-79 with Cys-156. Residues 82 to 102 (AAFLDTFLAANSMLSMAALSI) form a helical membrane-spanning segment. The Cytoplasmic segment spans residues 103–123 (DRWVAVVFPLSYRAKMRLRDA). The helical transmembrane segment at 124-144 (AFMVAYTWLHALTFPATALAL) threads the bilayer. At 145-168 (SWLGFHQLYASCTLCSRRPDERLR) the chain is on the extracellular side. The chain crosses the membrane as a helical span at residues 169-189 (FAVFTSAFHALSFLLSFIVLC). Topologically, residues 190–245 (FTYLKVLKVARFHCKRIDVITMQTLVLLVDIHPSVRERCLEEQKRRRQRATKKIST) are cytoplasmic. Residues 246–266 (FIGTFLVCFAPYVITRLVELF) form a helical membrane-spanning segment. Topologically, residues 267–276 (STAPIDSHWG) are extracellular. Residues 277–297 (VLSKCLAYSKAASDPFVYSLL) traverse the membrane as a helical segment. The Cytoplasmic segment spans residues 298–337 (RHQYRRSCKELLNRIFNRRSIHSVGLTGDSHSQNILPVSE).

The protein belongs to the G-protein coupled receptor 1 family. In terms of tissue distribution, detected in extracts of several brain regions including striatum, pons, cerebellum and cortex. Not detected in numerous peripheral tissue extracts, except in testis. In the brain, detected in cortical structures including the anterior cingulate area, posterior cingulate and the frontoparietal, somatosensory and piriform cortices. Prominent also in the olfactory tubercle, the islands of Calleja, ventromedial and posterior nuclei of the hypothalamus, the medial septal nucleus, nucleus of the diagonal band and the ventral tegmental area. Localized also to hippocampal structures, with signals strongest over the CA2 and CA3 regions of Ammon's horn and less so over the dentate gyrus. Expressed in the caudate putamen only in its most caudal portion, with a decreasing gradient of signal from the dorsal to ventral aspect. Strong expression associated with a single pontine structure, the inferior olivary nucleus.

The protein resides in the cell membrane. Its function is as follows. Orphan receptor. Displays a significant level of constitutive activity. Its effect is mediated by G(s)-alpha protein that stimulate adenylate cyclase, resulting in an elevation of intracellular cAMP. This Rattus norvegicus (Rat) protein is G-protein coupled receptor 26 (Gpr26).